The chain runs to 283 residues: Gap junction beta-1 protein (283 aa).

Topologically, residues 1-22 (MNWTGLYTLLSGVNRHSTAIGR) are cytoplasmic. A helical transmembrane segment spans residues 23 to 45 (VWLSVIFIFRIMVLVVAAESVWG). At 46–75 (DEKSSFICNTLQPGCNSVCYDHFFPISHVR) the chain is on the extracellular side. A helical transmembrane segment spans residues 76-95 (LWSLQLILVSTPALLVAMHV). At 96 to 130 (AHQQHIEKKMLRLEGHGDPIHLEEVKRHKVHISGT) the chain is on the cytoplasmic side. A helical transmembrane segment spans residues 131 to 153 (LWWTYVISVVFRLLFEAAFMYVF). Residues 154–191 (YLLYPGYAMVRLVKCDAYPCPNTVDCFVSRPTEKTVFT) lie on the Extracellular side of the membrane. The helical transmembrane segment at 192–214 (VFMLAASGICIILNVAEVVYLIV) threads the bilayer. Residues 215 to 283 (RACARRAQRR…AEKSDRCSAC (69 aa)) are Cytoplasmic-facing. Phosphoserine occurs at positions 233, 258, 266, and 277.

The protein belongs to the connexin family. Beta-type (group I) subfamily. In terms of assembly, a connexon is composed of a hexamer of connexins. Interacts with CNST.

The protein localises to the cell membrane. It is found in the cell junction. The protein resides in the gap junction. One gap junction consists of a cluster of closely packed pairs of transmembrane channels, the connexons, through which materials of low MW diffuse from one cell to a neighboring cell. The polypeptide is Gap junction beta-1 protein (GJB1) (Equus caballus (Horse)).